The sequence spans 83 residues: MSGNTGERSFADIITSIRYWVIHSITIPSLFIAGWLFVSTGLAYDVFGSPRPNEYFTENRQGIPLITGRFDPLEQLDEFSRSF.

Residues 21-35 (VIHSITIPSLFIAGW) traverse the membrane as a helical segment. His-23 contacts heme.

It belongs to the PsbE/PsbF family. As to quaternary structure, heterodimer of an alpha subunit and a beta subunit. PSII is composed of 1 copy each of membrane proteins PsbA, PsbB, PsbC, PsbD, PsbE, PsbF, PsbH, PsbI, PsbJ, PsbK, PsbL, PsbM, PsbT, PsbX, PsbY, PsbZ, Psb30/Ycf12, at least 3 peripheral proteins of the oxygen-evolving complex and a large number of cofactors. It forms dimeric complexes. It depends on heme b as a cofactor.

Its subcellular location is the plastid. The protein localises to the chloroplast thylakoid membrane. In terms of biological role, this b-type cytochrome is tightly associated with the reaction center of photosystem II (PSII). PSII is a light-driven water:plastoquinone oxidoreductase that uses light energy to abstract electrons from H(2)O, generating O(2) and a proton gradient subsequently used for ATP formation. It consists of a core antenna complex that captures photons, and an electron transfer chain that converts photonic excitation into a charge separation. This Panax ginseng (Korean ginseng) protein is Cytochrome b559 subunit alpha.